The primary structure comprises 347 residues: NADH-ubiquinone oxidoreductase chain 2 (347 aa).

The next 10 helical transmembrane spans lie at 3–23 (PIIYTTLIMTVMSGTMLVMIS), 25–45 (HWLLIWIGFEMNLLAMIPVLM), 59–79 (YFLTQATASMMLMMAIIINLL), 89–109 (MFNPVAMTMMTMALAMKLGLS), 149–169 (INPNLMLTMAMLSILIGGWGG), 178–198 (IMAYSSIAHMGWMTAVLPYNT), 200–220 (MTILNLLIYITMTLAMFMLLI), 237–257 (MPVITSLMMVTLLSMGGLPPL), 274–294 (ESIIMPTLMAMTALLNLYFYM), and 325–345 (LLPTMIVLSTLVLPMTPALSS).

This sequence belongs to the complex I subunit 2 family. As to quaternary structure, core subunit of respiratory chain NADH dehydrogenase (Complex I) which is composed of 45 different subunits. Interacts with TMEM242.

The protein localises to the mitochondrion inner membrane. It catalyses the reaction a ubiquinone + NADH + 5 H(+)(in) = a ubiquinol + NAD(+) + 4 H(+)(out). In terms of biological role, core subunit of the mitochondrial membrane respiratory chain NADH dehydrogenase (Complex I) which catalyzes electron transfer from NADH through the respiratory chain, using ubiquinone as an electron acceptor. Essential for the catalytic activity and assembly of complex I. This is NADH-ubiquinone oxidoreductase chain 2 from Sus scrofa (Pig).